A 435-amino-acid chain; its full sequence is Ribulose bisphosphate carboxylase/oxygenase activase 2, chloroplastic (435 aa).

The N-terminal 56 residues, 1–56 (MAAAYSTVGAVNRAPLSLNGSGARASLVPSTAFFGSSLKKSAAKFPKASSGNFKIV), are a transit peptide targeting the chloroplast. ATP is bound at residue 165–172 (GGKGQGKS).

It belongs to the RuBisCO activase family.

The protein localises to the plastid. The protein resides in the chloroplast stroma. Its function is as follows. Activation of RuBisCO (ribulose-1,5-bisphosphate carboxylase/oxygenase; EC 4.1.1.39) involves the ATP-dependent carboxylation of the epsilon-amino group of lysine leading to a carbamate structure. This is Ribulose bisphosphate carboxylase/oxygenase activase 2, chloroplastic (RCA2) from Larrea tridentata (Creosote bush).